A 61-amino-acid polypeptide reads, in one-letter code: Protein CopA/IncA (61 aa).

In terms of biological role, controls the copy number in gene replication. This chain is Protein CopA/IncA (copA), found in Escherichia coli.